A 235-amino-acid chain; its full sequence is MSSELLISNSKPRPEGLRKLCEGETVILPRDITPSKCAYFLKQNIVFISYIFIHIIITIILNRLALSAHGNTLIIILAALLITISLFLLLLLPYLSCSRYKLRCLDDDCKFKLLAEVITHKPNMDLSTWDRIAYDMNQFVYDRRICADRSFFYDGSYCYQVFKKLVATPYLVNSNMNSIYADLEMRSNGATNINDSGNSSLHIELGTYIFKALAVFRNSVDKYWEDKYPEMGVTV.

Residues 1-44 lie on the Cytoplasmic side of the membrane; sequence MSSELLISNSKPRPEGLRKLCEGETVILPRDITPSKCAYFLKQN. A helical transmembrane segment spans residues 45–65; it reads IVFISYIFIHIIITIILNRLA. Over 66–72 the chain is Extracellular; the sequence is LSAHGNT. The chain crosses the membrane as a helical span at residues 73–93; it reads LIIILAALLITISLFLLLLLP. Over 94–235 the chain is Cytoplasmic; that stretch reads YLSCSRYKLR…DKYPEMGVTV (142 aa).

This sequence belongs to the DUP/COS family. As to quaternary structure, interacts according to large scale protein interaction studies with BZZ1, SRB4 and SUA7.

It localises to the cell membrane. The polypeptide is DUP240 protein DFP4 (Saccharomyces cerevisiae (strain ATCC 204508 / S288c) (Baker's yeast)).